We begin with the raw amino-acid sequence, 538 residues long: Metal transporter Nramp5 (538 aa).

A run of 12 helical transmembrane segments spans residues 44–64, 77–97, 118–138, 140–160, 181–201, 227–247, 264–284, 324–346, 365–385, 391–411, 427–447, and 467–487; these read FLAHVGPGFMVSLAYLDPGNL, ELLWVILIGLIFALIIQSLAA, FVKIFLWLLAELAVIAADIPE, IGTAFAFNILFHIPVWVGVLI, FLISMLVFVMAACFFGELSIV, IALLGALVMPHNLFLHSALVL, FFLYESGFALFVALLINIAVV, SAIVYGVALLASGQSSTITGTYA, NLMTRTIAIAPSLIVSIIGGS, LIIIASMILSFELPFALIPLL, IYIIVFSWFLGLLIIGINMYF, and VLVGAAVFPFMLVYIVAVVYL. The tract at residues 518 to 538 is disordered; that stretch reads AVDDDEPLPYRDDLADIPLPR.

This sequence belongs to the NRAMP (TC 2.A.55) family.

It localises to the membrane. Functionally, probable metal transporter. The polypeptide is Metal transporter Nramp5 (NRAMP5) (Oryza sativa subsp. japonica (Rice)).